The sequence spans 626 residues: DNA-directed RNA polymerase subunit gamma (626 aa).

Cysteine 71, cysteine 73, cysteine 86, and cysteine 89 together coordinate Zn(2+). Mg(2+) contacts are provided by aspartate 467, aspartate 469, and aspartate 471.

Belongs to the RNA polymerase beta' chain family. RpoC1 subfamily. As to quaternary structure, in cyanobacteria the RNAP catalytic core is composed of 2 alpha, 1 beta, 1 beta', 1 gamma and 1 omega subunit. When a sigma factor is associated with the core the holoenzyme is formed, which can initiate transcription. The cofactor is Mg(2+). Zn(2+) is required as a cofactor.

It catalyses the reaction RNA(n) + a ribonucleoside 5'-triphosphate = RNA(n+1) + diphosphate. Its function is as follows. DNA-dependent RNA polymerase catalyzes the transcription of DNA into RNA using the four ribonucleoside triphosphates as substrates. The chain is DNA-directed RNA polymerase subunit gamma from Synechocystis sp. (strain ATCC 27184 / PCC 6803 / Kazusa).